The chain runs to 89 residues: Small ribosomal subunit protein uS15 (89 aa).

This sequence belongs to the universal ribosomal protein uS15 family. As to quaternary structure, part of the 30S ribosomal subunit. Forms a bridge to the 50S subunit in the 70S ribosome, contacting the 23S rRNA.

In terms of biological role, one of the primary rRNA binding proteins, it binds directly to 16S rRNA where it helps nucleate assembly of the platform of the 30S subunit by binding and bridging several RNA helices of the 16S rRNA. Functionally, forms an intersubunit bridge (bridge B4) with the 23S rRNA of the 50S subunit in the ribosome. In Parvibaculum lavamentivorans (strain DS-1 / DSM 13023 / NCIMB 13966), this protein is Small ribosomal subunit protein uS15.